The following is a 496-amino-acid chain: RNA-binding motif protein, Y chromosome, family 1 member B (496 aa).

The RRM domain maps to 8-85 (GKLFIGGLNR…KAIKVEQAKK (78 aa)). Disordered stretches follow at residues 67-349 (DMNG…HRDY) and 452-496 (KDQR…SSRY). 2 stretches are compositionally biased toward low complexity: residues 97 to 114 (PASS…SARG) and 149 to 159 (PVKRGPSSRSG). Positions 175-184 (NSWMGSQGPM) are enriched in polar residues. Basic and acidic residues-rich tracts occupy residues 204–214 (RNDRMSTRHDG), 242–253 (DNGHSNRDEHSS), 276–289 (AYRD…DESY), 313–326 (GYRD…HESY), 335–349 (SSRE…HRDY), and 484–496 (GESR…SSRY).

As to quaternary structure, interacts with splicing factor proteins SFRS3/SRP20, TRA2B/SFRS10, KHDRBS1/SAM68 and KHDRBS3. Testis-specific.

The protein resides in the nucleus. Functionally, RNA-binding protein which may be involved in spermatogenesis. Required for sperm development, possibly by participating in pre-mRNA splicing in the testis. This Homo sapiens (Human) protein is RNA-binding motif protein, Y chromosome, family 1 member B (RBMY1B).